Consider the following 266-residue polypeptide: MRLIPLTRAAQVGKWAAAHIAKRINDFKPTAERPFVLGLPTGGTPLATYKALIELYQAGEVSFKHVVTFNMDEYIGIPADHPESYRSFMYNNFFNHIDIQEENINLLNGNTDNHEAECKRYEDKIKSYGKINLFMGGVGNDGHIAFNEPASSLSSRTRIKTLTEDTRIANSRFFDGDINQVPKYALTIGVGTLLDAEEVMILVTGHNKALALEAAVEGCVNHLWTVSALQLHPKAVIVCDEPSQQELKVKTVKYFSELEAENIKGF.

Aspartate 72 (proton acceptor; for enolization step) is an active-site residue. Aspartate 141 serves as the catalytic For ring-opening step. The active-site Proton acceptor; for ring-opening step is the histidine 143. Catalysis depends on glutamate 148, which acts as the For ring-opening step.

Belongs to the glucosamine/galactosamine-6-phosphate isomerase family. NagB subfamily. Homohexamer; trimer of disulfide-linked dimers.

The catalysed reaction is alpha-D-glucosamine 6-phosphate + H2O = beta-D-fructose 6-phosphate + NH4(+). Its pathway is amino-sugar metabolism; N-acetylneuraminate degradation; D-fructose 6-phosphate from N-acetylneuraminate: step 5/5. Allosterically activated by N-acetylglucosamine 6-phosphate (GlcNAc6P). Functionally, catalyzes the reversible isomerization-deamination of glucosamine 6-phosphate (GlcN6P) to form fructose 6-phosphate (Fru6P) and ammonium ion. The sequence is that of Glucosamine-6-phosphate deaminase from Vibrio parahaemolyticus serotype O3:K6 (strain RIMD 2210633).